The sequence spans 270 residues: MKSLFKVTLLATTMAVALHAPITFAAEAAKPATTADSKAAFKNDDQKSAYALGASLGRYMENSLKEQEKLGIKLDKDQLIAGVQDAFADKSKLSDQEIEQTLQAFEARVKSSAQAKMEKDAADNEAKGKEYREKFAKEKGVKTSSTGLVYQVVEAGKGEAPKDSDTVVVNYKGTLIDGKEFDNSYTRGEPLSFRLDGVIPGWTEGLKNIKKGGKIKLVIPPELAYGKAGVPGIPPNSTLVFDVELLDVKPAPKADAKPEADAKAADSAKK.

The N-terminal stretch at 1–25 (MKSLFKVTLLATTMAVALHAPITFA) is a signal peptide. Residues 164–249 (SDTVVVNYKG…VFDVELLDVK (86 aa)) form the PPIase FKBP-type domain.

It belongs to the FKBP-type PPIase family.

It localises to the periplasm. It carries out the reaction [protein]-peptidylproline (omega=180) = [protein]-peptidylproline (omega=0). In terms of biological role, PPIases accelerate the folding of proteins. It catalyzes the cis-trans isomerization of proline imidic peptide bonds in oligopeptides. The protein is FKBP-type peptidyl-prolyl cis-trans isomerase FkpA (fkpA) of Escherichia coli O157:H7.